The following is a 307-amino-acid chain: UAP56-interacting factor (307 aa).

A compositionally biased stretch (low complexity) spans 1–25 (MSGFGAAALLSGSSAAAGTRSGSSD). Disordered stretches follow at residues 1 to 28 (MSGF…DSLE) and 41 to 85 (NKKE…KNHL). The short motif at 26-44 (SLEKIDMSLDDIIKLNKKE) is the UAP56-binding motif element. The segment covering 57–78 (LQQNRTQQFRTPGSKWGIQQQK) has biased composition (polar residues).

The protein belongs to the UIF family. Widely expressed.

It localises to the nucleus. The protein resides in the nucleoplasm. The protein localises to the nucleus speckle. In terms of biological role, required for mRNA export from the nucleus to the cytoplasm. Acts as an adapter that uses the DDX39B/UAP56-NFX1 pathway to ensure efficient mRNA export and delivering to the nuclear pore. The polypeptide is UAP56-interacting factor (FYTTD1) (Gallus gallus (Chicken)).